We begin with the raw amino-acid sequence, 538 residues long: Cytochrome P450 monooxygenase okaG (538 aa).

Residues 3–23 (LISPLAAVLSAMAIVLGLLFF) traverse the membrane as a helical segment. Cys-484 contacts heme.

The protein belongs to the cytochrome P450 family. It depends on heme as a cofactor.

It localises to the membrane. The catalysed reaction is 12-deshydroxyl okaramine E + 2 reduced [NADPH--hemoprotein reductase] + 2 O2 = 3-desmethyl okaramine B + 2 oxidized [NADPH--hemoprotein reductase] + 2 H2O + 2 H(+). The protein operates within alkaloid biosynthesis. Nonribosomal peptide synthetase; part of the gene cluster that mediates the biosynthesis of okaramine B, a prenylated indole alkaloid that possesses an unusual octacyclic ring system, including a four-membered azetidine ring and an eight-membered azocine ring, and that exhibits insecticidal activity against silkworm larvae. Within the pathway, okaG acts as a 2,3-diol synthase that installs 2,3-diol on the okaramine scaffold to convert 12-deshydroxyl okaramine E into 3-desmethyl okaramine B. OkaG is also able to produce use okaramine E and produce okaramine D with the help of the methyltransferase okaF. The biosynthesis begins with the NRPS okaA that condenses two tryptophan molecules into cyclo(L-Trp-L-Trp). Prenylation by the prenyltransferase okaC then leads to the formation of cyclo(N8-(alpha,alpha-dimethylallyl)-L-Trp-6a-(alpha,alpha-dime-thylallyl)-L-Trp). This is followed by indole 2,3-epoxidation by the FAD-dependent monooxygenase okaB to facilitate the formation of the hexahydropyrrolo[2,3-b]indole (HPI) moiety of okaramine C. The cytochrome P450 monooxygenase okaD then likely catalyzes formation of the eight-membered ring of okaramine A. The dioxygenase okaE further forms the unusual 2-dimethyl-3-methyl-azetidine ring to yield 12-deshydroxyl okaramine E, as well as the hydroxylation of 12-deshydroxyl okaramine E to produce okaramine E. The cytochrome P450 monoxygenase okaG converts 12-deshydroxyl okaramine E into 3-desmethyl okaramine B which is further methylated by the methyltransferase okaF into okaramine B. In a shunt pathway, okaG and okaF together are also able to convert okaramine E into okaramine D. Okaramine H is produced by nonenzymatic conversion from okaramine A. This Penicillium ochrochloron protein is Cytochrome P450 monooxygenase okaG.